The primary structure comprises 290 residues: Translin-associated protein X (290 aa).

Residues 1–34 (MNGKEGPGGFRKRKHDNFPHNQRREGKDASSSSP) are disordered. The span at 16-28 (DNFPHNQRREGKD) shows a compositional bias: basic and acidic residues. The interval 73 to 208 (LLHRITSAPD…MRMCINSVGN (136 aa)) is interaction with C1D. Residues Glu129 and Glu197 each contribute to the Mg(2+) site. Lys279 participates in a covalent cross-link: Glycyl lysine isopeptide (Lys-Gly) (interchain with G-Cter in SUMO2).

This sequence belongs to the translin family. In terms of assembly, ring-shaped heterooctamer of six TSN and two TSNAX subunits. Interacts with GOLGA3, TSNAXIP1, SUN1 and AKAP9. Interacts with the homodimeric form of C1D following gamma-radiation. Interacts with TSN and C1D in a mutually exclusive manner. In terms of processing, sumoylated with SUMO1. In terms of tissue distribution, detected in cerebellum.

Its subcellular location is the cytoplasm. The protein resides in the perinuclear region. It is found in the golgi apparatus. The protein localises to the nucleus. Acts in combination with TSN as an endonuclease involved in the activation of the RNA-induced silencing complex (RISC). Possible role in spermatogenesis. This is Translin-associated protein X (Tsnax) from Rattus norvegicus (Rat).